A 267-amino-acid chain; its full sequence is MQREEKQLEACLDALISQVSDIKNSLVGFIHKLENEYDRLTWPSVLDSFALLSGQLNTLNKVLKNEKTPLLRNQVIIPLLLSPDRDEEIMRLTEGRVPVFSHEVVPDHLRTKPDPDVEELEKQLSAEAARITSEAAQKQVQSMNKMCSNLLDKISKEERESELGSLRQNKQTFNPTDTNALVAAVAFGKGLSNRRPPGQGGPMAPGQTGASSMLPNATGMQVPMSLPPNQQQQHMAGVSMSQGSQPGKMPSSIKTNIKSASMHPYQR.

Coiled coils occupy residues methionine 1 to leucine 26 and aspartate 116 to glutamate 160. Positions glycine 190–arginine 267 are disordered. Polar residues predominate over residues proline 227 to glutamine 245.

Belongs to the Mediator complex subunit 8 family. As to quaternary structure, component of the Mediator complex. May be part of a multisubunit E3 ubiquitin-protein ligase complex.

It localises to the nucleus. The protein operates within protein modification; protein ubiquitination. Its function is as follows. Component of the Mediator complex, a coactivator involved in the regulated transcription of nearly all RNA polymerase II-dependent genes. Mediator functions as a bridge to convey information from gene-specific regulatory proteins to the basal RNA polymerase II transcription machinery. Mediator is recruited to promoters by direct interactions with regulatory proteins and serves as a scaffold for the assembly of a functional preinitiation complex with RNA polymerase II and the general transcription factors. May play a role as a target recruitment subunit in E3 ubiquitin-protein ligase complexes and thus in ubiquitination and subsequent proteasomal degradation of target proteins. In Xenopus tropicalis (Western clawed frog), this protein is Mediator of RNA polymerase II transcription subunit 8 (med8).